The primary structure comprises 219 residues: UPF0502 protein Gmet_0262 (219 aa).

This sequence belongs to the UPF0502 family.

This is UPF0502 protein Gmet_0262 from Geobacter metallireducens (strain ATCC 53774 / DSM 7210 / GS-15).